Reading from the N-terminus, the 356-residue chain is Tetraacyldisaccharide 4'-kinase (356 aa).

51–58 (GWGGSGKT) is an ATP binding site.

The protein belongs to the LpxK family.

The enzyme catalyses a lipid A disaccharide + ATP = a lipid IVA + ADP + H(+). The protein operates within glycolipid biosynthesis; lipid IV(A) biosynthesis; lipid IV(A) from (3R)-3-hydroxytetradecanoyl-[acyl-carrier-protein] and UDP-N-acetyl-alpha-D-glucosamine: step 6/6. In terms of biological role, transfers the gamma-phosphate of ATP to the 4'-position of a tetraacyldisaccharide 1-phosphate intermediate (termed DS-1-P) to form tetraacyldisaccharide 1,4'-bis-phosphate (lipid IVA). The polypeptide is Tetraacyldisaccharide 4'-kinase (Oleidesulfovibrio alaskensis (strain ATCC BAA-1058 / DSM 17464 / G20) (Desulfovibrio alaskensis)).